The chain runs to 304 residues: D-alanine--D-alanine ligase (304 aa).

The 197-residue stretch at K103–K299 folds into the ATP-grasp domain. An ATP-binding site is contributed by E129 to S184. Mg(2+) contacts are provided by D253, E266, and N268.

It belongs to the D-alanine--D-alanine ligase family. Mg(2+) is required as a cofactor. Mn(2+) serves as cofactor.

The protein localises to the cytoplasm. The enzyme catalyses 2 D-alanine + ATP = D-alanyl-D-alanine + ADP + phosphate + H(+). It functions in the pathway cell wall biogenesis; peptidoglycan biosynthesis. Its function is as follows. Cell wall formation. In Neisseria meningitidis serogroup C / serotype 2a (strain ATCC 700532 / DSM 15464 / FAM18), this protein is D-alanine--D-alanine ligase.